The primary structure comprises 1040 residues: Alpha-mannosidase 2C1 (1040 aa).

Co(2+) contacts are provided by His260, Asp262, Asp372, and His577. The active-site Nucleophile is Asp372.

The protein belongs to the glycosyl hydrolase 38 family. It depends on Co(2+) as a cofactor.

The protein resides in the cytoplasm. It catalyses the reaction Hydrolysis of terminal, non-reducing alpha-D-mannose residues in alpha-D-mannosides.. Its activity is regulated as follows. Strongly inhibited by swainsonine. Also inhibited to a lesser extent by deoxymannojirimycin (DMM). In terms of biological role, cleaves alpha 1,2-, alpha 1,3-, and alpha 1,6-linked mannose residues on cytoplasmic free oligosaccharides generated by N-glycoprotein degradation pathways. In Homo sapiens (Human), this protein is Alpha-mannosidase 2C1 (MAN2C1).